The sequence spans 694 residues: Probable methyltransferase PMT11 (694 aa).

The Cytoplasmic portion of the chain corresponds to 1–14; the sequence is MKPLTNGDLFKSPT. A helical; Signal-anchor for type II membrane protein transmembrane segment spans residues 15–32; it reads LIKISALVFVTVAFFYLG. The Lumenal segment spans residues 33–694; it reads KHWSDDGYQQ…LTCEKRLLRA (662 aa). Asparagine 69 and asparagine 77 each carry an N-linked (GlcNAc...) asparagine glycan. The segment at 83-128 is disordered; it reads IPATIRQQPPSVVADTEKVKVEANPPPPPPPSPSPPPPPGPVKSFG. Residues 106–123 show a composition bias toward pro residues; it reads NPPPPPPPSPSPPPPPGP. N-linked (GlcNAc...) asparagine glycans are attached at residues asparagine 155, asparagine 378, and asparagine 423.

It belongs to the methyltransferase superfamily.

Its subcellular location is the golgi apparatus membrane. This chain is Probable methyltransferase PMT11, found in Arabidopsis thaliana (Mouse-ear cress).